The sequence spans 80 residues: Metallothionein-like protein type 2 (80 aa).

The protein belongs to the metallothionein superfamily. Type 15 family.

Metallothioneins have a high content of cysteine residues that bind various heavy metals. In Ricinus communis (Castor bean), this protein is Metallothionein-like protein type 2 (MTI).